The chain runs to 489 residues: Ribonuclease G (489 aa).

The S1 motif domain occupies glycine 39–arginine 128. The Mg(2+) site is built by aspartate 304 and aspartate 347.

The protein belongs to the RNase E/G family. RNase G subfamily. Homodimer, in equilibrium with possible higher multimers. Mg(2+) serves as cofactor.

It is found in the cytoplasm. Functionally, an endonuclease that acts in the processing of the 5'-end of 16S rRNA and 23S rRNA. It prefers 5'-monophosphorylated substrates and cleaves single-stranded sites rich in A and U residues; contributes to tRNA processing and mRNA turnover. This is Ribonuclease G (rng) from Escherichia coli O157:H7.